We begin with the raw amino-acid sequence, 236 residues long: Ribose-5-phosphate isomerase A (236 aa).

Residues 28–31, 83–86, and 96–99 contribute to the substrate site; these read TGST, DGAD, and KGGG. Catalysis depends on Glu-105, which acts as the Proton acceptor. Lys-123 contacts substrate.

Belongs to the ribose 5-phosphate isomerase family. As to quaternary structure, homodimer.

It catalyses the reaction aldehydo-D-ribose 5-phosphate = D-ribulose 5-phosphate. It functions in the pathway carbohydrate degradation; pentose phosphate pathway; D-ribose 5-phosphate from D-ribulose 5-phosphate (non-oxidative stage): step 1/1. Functionally, catalyzes the reversible conversion of ribose-5-phosphate to ribulose 5-phosphate. This is Ribose-5-phosphate isomerase A from Methylorubrum extorquens (strain CM4 / NCIMB 13688) (Methylobacterium extorquens).